Here is a 425-residue protein sequence, read N- to C-terminus: Polyribonucleotide 5'-hydroxyl-kinase Clp1 (425 aa).

Residues Glu-22, Lys-62, and 124 to 129 contribute to the ATP site; that span reads DVGKST.

It belongs to the Clp1 family. Clp1 subfamily. Component of the tRNA splicing endonuclease complex. Component of pre-mRNA cleavage complex II (CF-II).

The protein resides in the nucleus. It catalyses the reaction a 5'-end dephospho-2'-deoxyribonucleoside-DNA + ATP = a 5'-end 5'-phospho-2'-deoxyribonucleoside-DNA + ADP + H(+). The enzyme catalyses a 5'-end dephospho-ribonucleoside-RNA + ATP = a 5'-end 5'-phospho-ribonucleoside-RNA + ADP + H(+). Polynucleotide kinase that can phosphorylate the 5'-hydroxyl groups of double-stranded RNA (dsRNA), single-stranded RNA (ssRNA), double stranded DNA (dsDNA) and double-stranded DNA:RNA hybrids. dsRNA is phosphorylated more efficiently than dsDNA, and the RNA component of a DNA:RNA hybrid is phosphorylated more efficiently than the DNA component. Plays a role in both tRNA splicing and mRNA 3'-end formation. Component of the tRNA splicing endonuclease complex: phosphorylates the 5'-terminus of the tRNA 3'-exon during tRNA splicing; this phosphorylation event is a prerequisite for the subsequent ligation of the two exon halves and the production of a mature tRNA. Its role in tRNA splicing and maturation is required for cerebellar development. Component of the pre-mRNA cleavage complex II (CF-II), which seems to be required for mRNA 3'-end formation. Also phosphorylates the 5'-terminus of exogenously introduced short interfering RNAs (siRNAs), which is a necessary prerequisite for their incorporation into the RNA-induced silencing complex (RISC). However, endogenous siRNAs and microRNAs (miRNAs) that are produced by the cleavage of dsRNA precursors by dicer1 already contain a 5'-phosphate group, so this protein may be dispensible for normal RNA-mediated gene silencing. The polypeptide is Polyribonucleotide 5'-hydroxyl-kinase Clp1 (Gallus gallus (Chicken)).